We begin with the raw amino-acid sequence, 253 residues long: Major prion protein (253 aa).

Residues methionine 1 to cysteine 22 form the signal peptide. The interaction with GRB2, ERI3 and SYN1 stretch occupies residues lysine 23–serine 230. Residues proline 26 to serine 108 are disordered. Tandem repeats lie at residues proline 51–glutamine 59, proline 60–glutamine 67, proline 68–glutamine 75, proline 76–glutamine 83, and proline 84–glutamine 91. Residues proline 51–glutamine 91 are 5 X 8 AA tandem repeats of P-H-G-G-G-W-G-Q. The span at glutamine 52 to threonine 95 shows a compositional bias: gly residues. Residues histidine 61, glycine 62, glycine 63, histidine 69, glycine 70, glycine 71, histidine 77, glycine 78, glycine 79, histidine 85, glycine 86, and glycine 87 each coordinate Cu(2+). Over residues glutamine 98–serine 108 the composition is skewed to basic residues. A disulfide bond links cysteine 179 and cysteine 214. N-linked (GlcNAc...) asparagine glycosylation is found at asparagine 181 and asparagine 197. Serine 230 carries the GPI-anchor amidated serine lipid modification. Positions serine 231–glycine 253 are cleaved as a propeptide — removed in mature form.

Belongs to the prion family. Monomer and homodimer. Has a tendency to aggregate into amyloid fibrils containing a cross-beta spine, formed by a steric zipper of superposed beta-strands. Soluble oligomers may represent an intermediate stage on the path to fibril formation. Copper binding may promote oligomerization. Interacts with GRB2, APP, ERI3/PRNPIP and SYN1. Mislocalized cytosolically exposed PrP interacts with MGRN1; this interaction alters MGRN1 subcellular location and causes lysosomal enlargement. Interacts with KIAA1191.

The protein localises to the cell membrane. Its subcellular location is the golgi apparatus. In terms of biological role, its primary physiological function is unclear. Has cytoprotective activity against internal or environmental stresses. May play a role in neuronal development and synaptic plasticity. May be required for neuronal myelin sheath maintenance. May play a role in iron uptake and iron homeostasis. Soluble oligomers are toxic to cultured neuroblastoma cells and induce apoptosis (in vitro). Association with GPC1 (via its heparan sulfate chains) targets PRNP to lipid rafts. Also provides Cu(2+) or Zn(2+) for the ascorbate-mediated GPC1 deaminase degradation of its heparan sulfate side chains. This is Major prion protein (PRNP) from Macaca fascicularis (Crab-eating macaque).